We begin with the raw amino-acid sequence, 370 residues long: S-adenosylmethionine decarboxylase proenzyme (370 aa).

F28 is a binding site for substrate. Catalysis depends on residues E29 and E32. Residue E85 coordinates substrate. S86 (schiff-base intermediate with substrate; via pyruvic acid) is an active-site residue. Position 86 is a pyruvic acid (Ser); by autocatalysis (S86). C100 (proton donor; for catalytic activity) is an active-site residue. Active-site proton acceptor; for processing activity residues include S250 and H263. Residue E267 participates in substrate binding.

Belongs to the eukaryotic AdoMetDC family. As to quaternary structure, forms a heterodimer with catalytically inactive AdoMetDC prozyme; heterodimerization is required to activate AdoMetDC. It depends on pyruvate as a cofactor. Post-translationally, is synthesized initially as an inactive proenzyme. Formation of the active enzyme involves a self-maturation process in which the active site pyruvoyl group is generated from an internal serine residue via an autocatalytic post-translational modification. Two non-identical subunits are generated from the proenzyme in this reaction, and the pyruvate is formed at the N-terminus of the alpha chain, which is derived from the carboxyl end of the proenzyme. The post-translation cleavage follows an unusual pathway, termed non-hydrolytic serinolysis, in which the side chain hydroxyl group of the serine supplies its oxygen atom to form the C-terminus of the beta chain, while the remainder of the serine residue undergoes an oxidative deamination to the alpha chain.

The enzyme catalyses S-adenosyl-L-methionine + H(+) = S-adenosyl 3-(methylsulfanyl)propylamine + CO2. It functions in the pathway amine and polyamine biosynthesis; S-adenosylmethioninamine biosynthesis; S-adenosylmethioninamine from S-adenosyl-L-methionine: step 1/1. Its activity is regulated as follows. Allosterically activated by AdoMetDC prozyme. Activated by putrescine. Inhibited by spermine and methylglyoxal-bis(guanylhydrazone) (MGBG) and slightly by spermidine. Inhibited by 5'-([(Z)-4-amino-2-butenyl]methylamino)-5'-deoxyadenosine (MDL 73811). In terms of biological role, probably in association with catalytically inactive AdoMetDC prozyme, catalyzes the decarboxylation of S-adenosyl-L-methionine which is essential for the biosynthesis of the polyamine spermidine. Required for growth and survival during the bloodstream life cycle stage. The protein is S-adenosylmethionine decarboxylase proenzyme of Trypanosoma cruzi.